A 947-amino-acid polypeptide reads, in one-letter code: Regulator of spindle assembly protein 2 (947 aa).

Disordered stretches follow at residues 20-148 (EKPA…LSEQ) and 173-211 (SPHE…LKPR). Composition is skewed to basic and acidic residues over residues 30 to 50 (PKYR…EGEK) and 62 to 84 (TRED…DLRI). Polar residues-rich tracts occupy residues 90 to 102 (SATP…SDQY) and 179 to 188 (QQTIQESSEQ). Residues 276–320 (IIAEEAKKRRNEAEAVRKLIEVETQNAKKRAVIQELKDRIDKLTQ) adopt a coiled-coil conformation. Disordered regions lie at residues 407–453 (KINP…RRIG), 575–594 (ERES…LEIP), 600–662 (SVTT…GLII), and 681–705 (EQSL…FLLD). Over residues 411 to 422 (SSQLNQQSSSDA) the composition is skewed to low complexity. Residues 430 to 449 (EASTQMTSRLAESAMTQTSP) are compositionally biased toward polar residues. The stretch at 563–591 (AGLSHYLEQVKKERESMEAQESESESMEL) forms a coiled coil. Positions 580–590 (EAQESESESME) are enriched in acidic residues. The segment covering 645–657 (FEHEIEEHKEPEK) has biased composition (basic and acidic residues).

As to quaternary structure, interacts with phosphatase regulatory subunit rsa-1 and tpxl-1. May interact with spd-5. May interact with sys-1.

Its subcellular location is the cytoplasm. The protein localises to the cytoskeleton. The protein resides in the microtubule organizing center. It is found in the centrosome. In terms of biological role, recruits rsa-1 and, thereby, phosphatase let-92/paa-1 complex to the centrosomes. Recruits sys-1/beta-catenin to mitotic centrosomes during the first embryonic cell divisions. This is Regulator of spindle assembly protein 2 from Caenorhabditis elegans.